The following is a 1320-amino-acid chain: Junctional cadherin 5-associated protein (1320 aa).

8 disordered regions span residues 1 to 124, 183 to 202, 209 to 233, 252 to 426, 452 to 492, 676 to 720, 741 to 802, and 835 to 942; these read MYSV…GSGS, KKPRELGRQASDGDGRKRPQ, YPFVHGEHTSQNRKKSQSLPRALSP, GVPK…SIQY, DDTS…NEQS, ASSP…PTPT, NQKP…STTG, and ELQE…QKSQ. Polar residues-rich tracts occupy residues 58-71 and 95-107; these read RTSLGTGHVSNSEN and NQPSLAWSSQPQS. Residues 108 to 119 are compositionally biased toward basic and acidic residues; the sequence is GRDDIYWSRGRQ. Positions 255–267 are enriched in pro residues; sequence KVPPYPPSFPSPS. Over residues 308–329 the composition is skewed to basic and acidic residues; the sequence is FQDHQHRDPRGSYPTRSKDPSH. Over residues 338–356 the composition is skewed to pro residues; the sequence is LEPPVYVPPPSYRSPPQHI. The segment covering 369–378 has biased composition (polar residues); sequence VSSNQSQQQV. A compositionally biased stretch (pro residues) spans 404–415; sequence GSPPQGLPPQPY. A compositionally biased stretch (polar residues) spans 454–465; it reads TSYNPGLLTTQE. T484 is subject to Phosphothreonine. Residue S486 is modified to Phosphoserine. The span at 741 to 782 shows a compositional bias: polar residues; that stretch reads NQKPSVPHLQGQTSLSPSRNSAFSRTSSAINQASMSKGTSDQ. Residues 849–859 are compositionally biased toward acidic residues; the sequence is EDSEAEQPEDC. S851 is subject to Phosphoserine. Residues 865 to 877 show a composition bias toward polar residues; it reads KSWALQGTRTAQQ. Phosphoserine is present on residues S1027 and S1033. 2 disordered regions span residues 1085–1116 and 1153–1174; these read ARRTEQSQLPEPDASACNPSSSREDSSHSLAL and SDVDGFPTSQATSPEPGKKDEE. A phosphoserine mark is found at S1245 and S1248. The disordered stretch occupies residues 1275-1320; the sequence is DEAWQAGHLPSVSQNENGHPEVPRDKMSDQDLWCADSYDPSRVERV. Basic and acidic residues predominate over residues 1292–1303; sequence GHPEVPRDKMSD.

It localises to the cell junction. Its subcellular location is the adherens junction. The chain is Junctional cadherin 5-associated protein from Mus musculus (Mouse).